Here is a 115-residue protein sequence, read N- to C-terminus: Somatostatin-1 (115 aa).

The first 24 residues, 1–24 (MLSCRFQCALVLLSLAVVFSKVSA), serve as a signal peptide directing secretion. The propeptide occupies 25–88 (APSDLRLRQL…QDEVRLELDR (64 aa)). The disordered stretch occupies residues 65–95 (NDALDSSDLSRGADQDEVRLELDRSANSSPL). Positions 75–88 (RGADQDEVRLELDR) are enriched in basic and acidic residues. Cys104 and Cys115 are oxidised to a cystine.

This sequence belongs to the somatostatin family.

The protein localises to the secreted. Functionally, somatostatin inhibits the release of somatotropin. The polypeptide is Somatostatin-1 (sst1) (Protopterus annectens (African lungfish)).